A 290-amino-acid chain; its full sequence is Pyridoxal 5'-phosphate synthase subunit PdxS (290 aa).

Asp-22 provides a ligand contact to D-ribose 5-phosphate. Lys-79 serves as the catalytic Schiff-base intermediate with D-ribose 5-phosphate. Gly-151 is a D-ribose 5-phosphate binding site. Arg-163 provides a ligand contact to D-glyceraldehyde 3-phosphate. D-ribose 5-phosphate is bound by residues Gly-212 and 233–234 (GS).

It belongs to the PdxS/SNZ family. In the presence of PdxT, forms a dodecamer of heterodimers.

It carries out the reaction aldehydo-D-ribose 5-phosphate + D-glyceraldehyde 3-phosphate + L-glutamine = pyridoxal 5'-phosphate + L-glutamate + phosphate + 3 H2O + H(+). The protein operates within cofactor biosynthesis; pyridoxal 5'-phosphate biosynthesis. Its function is as follows. Catalyzes the formation of pyridoxal 5'-phosphate from ribose 5-phosphate (RBP), glyceraldehyde 3-phosphate (G3P) and ammonia. The ammonia is provided by the PdxT subunit. Can also use ribulose 5-phosphate and dihydroxyacetone phosphate as substrates, resulting from enzyme-catalyzed isomerization of RBP and G3P, respectively. This chain is Pyridoxal 5'-phosphate synthase subunit PdxS, found in Clostridium botulinum (strain Loch Maree / Type A3).